A 658-amino-acid chain; its full sequence is Protein kinase and PP2C-like domain-containing protein (658 aa).

One can recognise a Protein kinase domain in the interval 30–314; that stretch reads FTLLSPIAKG…DNVVLELESI (285 aa). Residues 36–44 and Lys57 each bind ATP; that span reads IAKGSESVV. The active-site Proton acceptor is Asp149. The PPM-type phosphatase domain occupies 392-648; the sequence is SCGSFATCGR…DNITVIVVFL (257 aa). Residues Asp428, Gly429, Asp599, and Asp639 each contribute to the Mn(2+) site.

This sequence in the N-terminal section; belongs to the protein kinase superfamily. Ser/Thr protein kinase family. It in the C-terminal section; belongs to the PP2C family. Mg(2+) serves as cofactor. It depends on Mn(2+) as a cofactor.

It carries out the reaction L-seryl-[protein] + ATP = O-phospho-L-seryl-[protein] + ADP + H(+). The catalysed reaction is L-threonyl-[protein] + ATP = O-phospho-L-threonyl-[protein] + ADP + H(+). The enzyme catalyses O-phospho-L-seryl-[protein] + H2O = L-seryl-[protein] + phosphate. It catalyses the reaction O-phospho-L-threonyl-[protein] + H2O = L-threonyl-[protein] + phosphate. The chain is Protein kinase and PP2C-like domain-containing protein from Arabidopsis thaliana (Mouse-ear cress).